A 239-amino-acid polypeptide reads, in one-letter code: Tetraspanin-9 (239 aa).

Residues 1 to 13 are Cytoplasmic-facing; it reads MARGCLCCVKYMM. Residues 14-34 form a helical membrane-spanning segment; that stretch reads FLFNLLFWLSGCGLLGVGIWL. Topologically, residues 35–55 are extracellular; that stretch reads SVSQGSFATFSPSFPSLSAAN. A helical membrane pass occupies residues 56–76; the sequence is LVITLGSVVMVTGFLGCLGAI. The Cytoplasmic portion of the chain corresponds to 77–85; the sequence is KENKCLLLS. A helical membrane pass occupies residues 86-106; sequence FFIVLLIILLAELILLILFFV. Topologically, residues 107-203 are extracellular; sequence YTEKVSENAK…VEEWLNDNKH (97 aa). N-linked (GlcNAc...) asparagine glycosylation is present at N180. A helical transmembrane segment spans residues 204-224; the sequence is LLGTIAMCVLVLQLLGMAFSM. Over 225–239 the chain is Cytoplasmic; the sequence is TLYQQIHRAGKKYDA.

Belongs to the tetraspanin (TM4SF) family.

Its subcellular location is the membrane. This is Tetraspanin-9 (tspan9) from Danio rerio (Zebrafish).